A 186-amino-acid chain; its full sequence is MEPTRDNPLFGGAFSATLPPGAIDVSDLRPVPDHQEVFCHRVTDQSLIVELLELQAHVQGEEAARYHFEDVGGVQEARAVQVETVQPLVLEKLALRGCCQEAWILSGQQQVAKENQQVAKYVTLHQALLRLPQYQTDLLLTFNQPPPENRSSLGPENLSIPPWSLGDFEQLVTSLTLHDPNIFGPE.

The tract at residues 27-70 (DLRPVPDHQEVFCHRVTDQSLIVELLELQAHVQGEEAARYHFED) is interaction with RAN.

This sequence belongs to the MOG1 family. As to quaternary structure, monomer. Interacts with RAN, both RAN-GTP and RAN-GDP. Competes with RCC1 for a common binding site on RAN and thereby inhibits RCC1-mediated nucleotide exchange. Forms a complex with RAN-GTP and RANBP1. Interacts with the cytoplasmic loop 2 of SCN5A.

Its subcellular location is the nucleus. The protein localises to the cytoplasm. The protein resides in the perinuclear region. It localises to the cell membrane. Functionally, may regulate the intracellular trafficking of RAN. Promotes guanine nucleotide release from RAN and inhibits binding of new GTP by preventing the binding of the RAN guanine nucleotide exchange factor RCC1. Regulates the levels of GTP-bound RAN in the nucleus, and thereby plays a role in the regulation of RAN-dependent mitotic spindle dynamics. Enhances the expression of SCN5A at the cell membrane in cardiomyocytes. This is Ran guanine nucleotide release factor (RANGRF) from Bos taurus (Bovine).